We begin with the raw amino-acid sequence, 1198 residues long: MTKKPGGPGKNRAINMLKRGLPRVFPLVGVKRVVMSLLDGRGPVRFVLALITFFKFTALAPTKALLGRWRAVEKSVAMKHLTSFKRELGTLIDAVNKRGKKQNKRGGNESSIMWLASLAIVIACAGAMKLSNFQGKLLMTINNTDIADVIVIPTSKGENRCWVRAIDVGYMCEDTITYECPKLAVGNDPEDVDCWCDNQEVYVQYGRCTRTRHSKRSRRSVSVQTHGESSLVNKKEAWLDSTKATRYLMKTENWIIRNPGYAFLAAALGWMLGSNSGQRVVFTILLLLVAPAYSFNCLGMGNRDFIEGASGATWVDLVLEGDSCLTIMANDKPTLDVRMINIEASQLAEVRSYCYHASVTDISTVARCPTTGEAHNEKRADSSYVCKQGFTDRGWGNGCGLFGKGSIDTCAKFSCTSKAIGRTIQPENIKYEVGVFVHGTTTSENHGNYSAQVGASQAAKFTVTPNAPSITLKLGDYGEVTLDCEPRSGLNTEAFYVMTVGSKSFLVHREWFHDLSLPWTSPSSTAWRNRELLMEFEEAHATKQSVVALGSQEGGLHQALAGAIVVEYSSSVKLTSGHLKCRLKMDKLALKGTTYGMCTEKFSFAKNPADTGHGTVVIELTYSGSDGPCKIPIVSVASLNDMTPVGRLVTVNPFVATSSSNSKVLVEMEPPFGDSYIVVGRGDKQINHHWYKAGSTLGKAFSTTLKGAQRLAALGDTAWDFGSIGGVFNSIGKAVHQVFGGAFRTLFGGMSWITQGLMGALLLWMGVNARDRSIALAFLATGGVLVFLATNVHADTGCAIDITRKEMRCGSGIFVHNDVEAWVDRYKYLPETPRSLAKIVHKAHQEGVCGVRSVTRLEHQMWESVRDELNVLLKENAVDLSVVVNKPVGRYRSAPKRLSMTQEKFEMGWKAWGKSILFAPELANSTFVVDGPETKECPDERRAWNSMQIEDFGFGITSTRVWLKIREENTDECDGAIIGTAVKGHVAVHSDLSYWIESRLNDTWKLERAVFGEVKSCTWPETHTLWGDGVEESELIIPHTIAGPRSKHNRREGYKTQNQGPWDENGIVLDFDYCPGTKVTITEDCGKRGPSIRTTTDSGKLITDWCCRSCSLPPLRFRTENGCWYGMEIRPVRHDETTLVRSQVDAFNGEMIDPFSAGPSGDVSGHPGGPSQEVDGQIDDSCGFGGPTCADAWGHHLH.

The tract at residues T2–N15 is interaction with host EXOC1. A hydrophobic; homodimerization of capsid protein C region spans residues L37–V72. Positions G106–A127 are cleaved as a propeptide — ER anchor for the capsid protein C, removed in mature form by serine protease NS3. A helical membrane pass occupies residues S110–L130. A glycan (N-linked (GlcNAc...) asparagine; by host) is linked at N142. Helical transmembrane passes span W254–S274 and V280–S294. Disulfide bonds link C297-C324, C354-C410, C354-C415, C368-C399, C386-C410, and C386-C415. The fusion peptide stretch occupies residues D392–G405. N448 is a glycosylation site (N-linked (GlcNAc...) asparagine; by host). 2 disulfides stabilise this stretch: C484–C581 and C598–C629. 2 helical membrane-spanning segments follow: residues F747–V767 and I774–A794. Cystine bridges form between C798-C809, C849-C937, C973-C1017, C1074-C1123, C1085-C1106, and C1107-C1110. N-linked (GlcNAc...) asparagine; by host glycosylation is found at N924 and N1001. The tract at residues M1151–I1178 is disordered.

Homodimer. Interacts (via N-terminus) with host EXOC1 (via C-terminus); this interaction results in EXOC1 degradation through the proteasome degradation pathway. Interacts with host CAPRIN1; this interaction is involved in the suppression of the integrated stress response. As to quaternary structure, forms heterodimers with envelope protein E in the endoplasmic reticulum and Golgi. In terms of assembly, homodimer; in the endoplasmic reticulum and Golgi. Interacts with protein prM. Interacts with non-structural protein 1. Genome polyprotein: Specific enzymatic cleavages in vivo yield mature proteins. Cleavages in the lumen of endoplasmic reticulum are performed by host signal peptidase, whereas cleavages in the cytoplasmic side are performed by serine protease NS3. Signal cleavage at the 2K-4B site requires a prior NS3 protease-mediated cleavage at the 4A-2K site. In terms of processing, cleaved in post-Golgi vesicles by a host furin, releasing the mature small envelope protein M, and peptide pr. This cleavage is incomplete as up to 30% of viral particles still carry uncleaved prM. Post-translationally, N-glycosylated.

The protein localises to the secreted. Its subcellular location is the virion membrane. It is found in the host endoplasmic reticulum membrane. Its function is as follows. Plays a role in virus budding by binding to the cell membrane and gathering the viral RNA into a nucleocapsid that forms the core of a mature virus particle. During virus entry, may induce genome penetration into the host cytoplasm after hemifusion induced by the surface proteins. Can migrate to the cell nucleus where it modulates host functions. Overcomes the anti-viral effects of host EXOC1 by sequestering and degrading the latter through the proteasome degradation pathway. Inhibits the integrated stress response (ISR) in the infected cell by binding to host CAPRIN1. Functionally, inhibits RNA silencing by interfering with host Dicer. In terms of biological role, prevents premature fusion activity of envelope proteins in trans-Golgi by binding to envelope protein E at pH6.0. After virion release in extracellular space, gets dissociated from E dimers. Acts as a chaperone for envelope protein E during intracellular virion assembly by masking and inactivating envelope protein E fusion peptide. prM is the only viral peptide matured by host furin in the trans-Golgi network probably to avoid catastrophic activation of the viral fusion activity in acidic Golgi compartment prior to virion release. prM-E cleavage is inefficient, and many virions are only partially matured. These uncleaved prM would play a role in immune evasion. Its function is as follows. May play a role in virus budding. Exerts cytotoxic effects by activating a mitochondrial apoptotic pathway through M ectodomain. May display a viroporin activity. Functionally, binds to host cell surface receptor and mediates fusion between viral and cellular membranes. Envelope protein is synthesized in the endoplasmic reticulum in the form of heterodimer with protein prM. They play a role in virion budding in the ER, and the newly formed immature particle is covered with 60 spikes composed of heterodimer between precursor prM and envelope protein E. The virion is transported to the Golgi apparatus where the low pH causes dissociation of PrM-E heterodimers and formation of E homodimers. prM-E cleavage is inefficient, and many virions are only partially matured. These uncleaved prM would play a role in immune evasion. The chain is Structural polyprotein from Ardeidae (herons).